A 75-amino-acid chain; its full sequence is Large ribosomal subunit protein bL31 (75 aa).

The protein belongs to the bacterial ribosomal protein bL31 family. Type A subfamily. Part of the 50S ribosomal subunit.

In terms of biological role, binds the 23S rRNA. The sequence is that of Large ribosomal subunit protein bL31 from Acidiphilium cryptum (strain JF-5).